A 205-amino-acid polypeptide reads, in one-letter code: MSDQLFERTMAFAGILQAVAQVQYIARHGDSDKDALAASLQSVLVTNPETTSDVYADKVALRKGYELIVSQLGDAKQKDVEVTRYLVGILALERKLTRSSNAMGMLSERINQIHRQLSHFEITDEQVIANFAGIYSDIISELGPKLQISGNPEFLKRTQTQQKIRALLLSAMRSAVLWRQLGGKRRHLVFARKTIVDTAMKSLTL.

It belongs to the HflD family.

It localises to the cytoplasm. Its subcellular location is the cell inner membrane. The protein is High frequency lysogenization protein HflD homolog of Shewanella halifaxensis (strain HAW-EB4).